The chain runs to 91 residues: Cell division protein FtsB (91 aa).

Topologically, residues 1–3 are cytoplasmic; the sequence is MKW. A helical transmembrane segment spans residues 4 to 21; that stretch reads LVAVLVVFVAMFQYRLWV. Topologically, residues 22–91 are periplasmic; sequence GEGSIADVVR…ETFFMIIDDQ (70 aa). Positions 23 to 63 form a coiled coil; it reads EGSIADVVRLEREIARQEADNERLRERNKQLAAEVDALKTG.

It belongs to the FtsB family. In terms of assembly, part of a complex composed of FtsB, FtsL and FtsQ.

The protein localises to the cell inner membrane. In terms of biological role, essential cell division protein. May link together the upstream cell division proteins, which are predominantly cytoplasmic, with the downstream cell division proteins, which are predominantly periplasmic. This is Cell division protein FtsB from Teredinibacter turnerae (strain ATCC 39867 / T7901).